The chain runs to 383 residues: Non-structural maintenance of chromosomes element 4 homolog B (383 aa).

Residues 1-22 (MRNSVKWETELTGDRSRRREAD) are compositionally biased toward basic and acidic residues. Disordered regions lie at residues 1–59 (MRNS…EQGI), 198–231 (MKQR…EKKS), and 355–383 (QGSV…NGGL). Residues 201 to 212 (RKSRVGNRKRTK) are compositionally biased toward basic residues. The span at 355–372 (QGSVIQEETVVEDSSNME) shows a compositional bias: polar residues.

The protein belongs to the NSE4 family. Interacts with SMC5, SMC6A or SMC6B. The SMC5-SMC6 complex is composed of the SMC5 and SMC6 heterodimer attached via their hinge domain and from the non-SMC subunit NSE4A or NSE4B. Not expressed in seedlings, rosette leaves and floral buds.

It is found in the nucleus. Its function is as follows. Component of the SMC5-SMC6 complex, that promotes sister chromatid alignment after DNA damage and facilitates double-stranded DNA breaks (DSBs) repair via homologous recombination between sister chromatids. This is Non-structural maintenance of chromosomes element 4 homolog B (NSE4B) from Arabidopsis thaliana (Mouse-ear cress).